The chain runs to 1098 residues: Protein diaphanous homolog 2 (1098 aa).

Methionine 1 is modified (N-acetylmethionine). The tract at residues 1–62 (MEELGAAASG…SFRKSATKRE (62 aa)) is disordered. A compositionally biased stretch (basic and acidic residues) spans 36–52 (ANEEETRNKPKLRDRIT). A GBD/FH3 domain is found at 90–463 (SLILSEKEVL…QIVLHCSGMD (374 aa)). Coiled coils occupy residues 375-416 (QLRV…NMLK) and 490-539 (EENE…GQGV). 5 disordered regions span residues 537–565 (QGVP…PPPP), 578–611 (PPPP…GVFP), 679–699 (MKGQ…PKKK), 1007–1047 (HKRK…NKEG), and 1063–1098 (GAAF…MSSK). 2 stretches are compositionally biased toward pro residues: residues 543–565 (IPGP…PPPP) and 578–608 (PPPP…PPGG). In terms of domain architecture, FH1 spans 544-620 (PGPPPPPPLP…PLLSGPIELP (77 aa)). In terms of domain architecture, FH2 spans 625–1025 (QKKLYKPDIP…SRRAKLAKEK (401 aa)). The stretch at 999 to 1050 (FLEALKENHKRKEMEEKSRRAKLAKEKAEQEKLERQKKKKQLIDINKEGDET) forms a coiled coil. 2 stretches are compositionally biased toward basic and acidic residues: residues 1007–1032 (HKRK…EKLE) and 1075–1087 (RNPD…LERS). The DAD domain maps to 1048–1078 (DETGVMDNLLEALQSGAAFRDRRKRIPRNPD).

The protein belongs to the formin homology family. Diaphanous subfamily. Interacts with MAPRE1 and APC.

May be involved in oogenesis. The protein is Protein diaphanous homolog 2 (Diaph2) of Mus musculus (Mouse).